Here is a 339-residue protein sequence, read N- to C-terminus: Uridylate kinase PUMPKIN, chloroplastic (339 aa).

A chloroplast-targeting transit peptide spans 1 to 53; it reads MAIPLPLTSCSPISTSSSISRTSFVPLTLRNRTFFSNQNYSRRVLISCSSSLS. A compositionally biased stretch (low complexity) spans 52 to 79; sequence LSSDNGSSPDSMNGNGNGNGSSLNGQSS. The segment at 52–89 is disordered; it reads LSSDNGSSPDSMNGNGNGNGSSLNGQSSFPRLPSFDGT. 102 to 105 lines the ATP pocket; sequence KVSG. The segment at 110–115 is involved in allosteric activation by GTP; the sequence is GDEEQN. A UMP-binding site is contributed by Gly144. Residues Gly145 and Arg149 each contribute to the ATP site. Asp165 lines the UMP pocket. Residues 180-184 and 189-191 contribute to the ATP site; these read QATME and PTR. UMP is bound at residue 226-233; it reads TGNPFFTT. ATP is bound by residues Thr253, Phe259, and Asp262.

It belongs to the UMP kinase family. Homomultimer. Homohexamer. Forms RNA-containing megadalton-sized complexes. As to expression, expressed exclusively in leaves, but not in roots.

The protein localises to the plastid. It localises to the chloroplast stroma. The enzyme catalyses UMP + ATP = UDP + ADP. Its pathway is pyrimidine metabolism; CTP biosynthesis via de novo pathway; UDP from UMP (UMPK route): step 1/1. Its function is as follows. Catalyzes the reversible phosphorylation of UMP to UDP. Required for specific post-transcriptional processes of many plastid transcripts (e.g. PSI (PsaA, PsaF), PSII (D1, CP43, CP47), Cytochrome b(6)f (Cytb(6)), ATP synthase (AtpC), LHCs (LHCa3, LHCb2), and NDH (NdhH)), thus being essential for retaining photosynthetic activity in chloroplasts. Associates with group II introns of the plastid transcripts trnG-UCC, trnV-UAC, petB, petD and ndhA to stabilize corresponding precursor RNAs. The polypeptide is Uridylate kinase PUMPKIN, chloroplastic (Arabidopsis thaliana (Mouse-ear cress)).